We begin with the raw amino-acid sequence, 156 residues long: Small ribosomal subunit protein uS7 (156 aa).

Belongs to the universal ribosomal protein uS7 family. As to quaternary structure, part of the 30S ribosomal subunit. Contacts proteins S9 and S11.

One of the primary rRNA binding proteins, it binds directly to 16S rRNA where it nucleates assembly of the head domain of the 30S subunit. Is located at the subunit interface close to the decoding center, probably blocks exit of the E-site tRNA. The protein is Small ribosomal subunit protein uS7 of Klebsiella pneumoniae (strain 342).